Consider the following 556-residue polypeptide: Beta-hexosaminidase subunit beta (556 aa).

Positions 1–42 are cleaved as a signal peptide; it reads MELCGLGLPRPPMLLALLLATLLAAMLALLTQVALVVQVAEA. The propeptide occupies 43 to 121; sequence ARAPSVSAKP…HHEPAEFQAK (79 aa). A glycan (N-linked (GlcNAc...) asparagine) is linked at N84. A disulfide bond links C91 and C137. Residues N142, N190, and N327 are each glycosylated (N-linked (GlcNAc...) asparagine). Intrachain disulfides connect C309–C360 and C534–C551. The active-site Proton donor is E355.

It belongs to the glycosyl hydrolase 20 family. There are 3 forms of beta-hexosaminidase: hexosaminidase A is a heterodimer composed of one subunit alpha and one subunit beta (chain A and B); hexosaminidase B is a homodimer of two beta subunits (two chains A and B); hexosaminidase S is a homodimer of two alpha subunits. The composition of the dimer (isozyme A versus isozyme S) has a significant effect on the substrate specificity of the alpha subunit active site. N-linked glycans at Asn-142 and Asn-190 consist of Man(3)-GlcNAc(2) and Man(5 to 7)-GlcNAc(2), respectively. Post-translationally, the beta-A and beta-B chains are produced by proteolytic processing of the precursor beta chain.

The protein resides in the lysosome. The protein localises to the cytoplasmic vesicle. It localises to the secretory vesicle. It is found in the cortical granule. The enzyme catalyses Hydrolysis of terminal non-reducing N-acetyl-D-hexosamine residues in N-acetyl-beta-D-hexosaminides.. The catalysed reaction is N-acetyl-beta-D-galactosaminyl-(1-&gt;4)-beta-D-3-sulfogalactosyl-(1-&gt;4)-beta-D-glucosyl-(1&lt;-&gt;1')-ceramide + H2O = a beta-D-3-sulfogalactosyl-(1-&gt;4)-beta-D-glucosyl-(1&lt;-&gt;1')-ceramide + N-acetyl-beta-D-galactosamine. It catalyses the reaction a ganglioside GM2 (d18:1(4E)) + H2O = a ganglioside GM3 (d18:1(4E)) + N-acetyl-beta-D-galactosamine. It carries out the reaction a ganglioside GM2 + H2O = a ganglioside GM3 + N-acetyl-beta-D-galactosamine. The enzyme catalyses beta-D-GalNAc-(1-&gt;4)-alpha-L-IdoA-(1-&gt;3)-beta-D-GalNAc-4-sulfate-(1-&gt;4)-alpha-L-IdoA-(1-&gt;3)-D-GalNAc-4-sulfate + H2O = alpha-L-IdoA-(1-&gt;3)-beta-D-GalNAc-4-sulfate-(1-&gt;4)-alpha-L-IdoA-(1-&gt;3)-D-GalNAc-4-sulfate + N-acetyl-D-galactosamine. The catalysed reaction is N-acetyl-beta-D-6-sulfogalactosaminyl-(1-&gt;4)-alpha-L-iduronyl-(1-&gt;3)-N-acetyl-D-6-sulfogalactosamine + H2O = alpha-L-iduronyl-(1-&gt;3)-N-acetyl-D-6-sulfogalactosamine + N-acetyl-D-6-sulfogalactosamine. Its activity is regulated as follows. Addition of GM2A stimulates the hydrolysis of sulfated glycosphingolipid SM2 and the ganglioside GM2. Functionally, hydrolyzes the non-reducing end N-acetyl-D-hexosamine and/or sulfated N-acetyl-D-hexosamine of glycoconjugates, such as the oligosaccharide moieties from proteins and neutral glycolipids, or from certain mucopolysaccharides. The isozyme B does not hydrolyze each of these substrates, however hydrolyzes efficiently neutral oligosaccharide. Only the isozyme A is responsible for the degradation of GM2 gangliosides in the presence of GM2A. During fertilization is responsible, at least in part, for the zona block to polyspermy. Present in the cortical granules of non-activated oocytes, is exocytosed during the cortical reaction in response to oocyte activation and inactivates the sperm galactosyltransferase-binding site, accounting for the block in sperm binding to the zona pellucida. The chain is Beta-hexosaminidase subunit beta from Homo sapiens (Human).